Here is a 226-residue protein sequence, read N- to C-terminus: tRNA (guanine-N(7)-)-methyltransferase (226 aa).

The tract at residues 1–21 (MTHPQQPHGPLRSFGRLKSRP) is disordered. S-adenosyl-L-methionine contacts are provided by E59, E84, D111, and D133. The active site involves D133. K137 lines the substrate pocket. The tract at residues 139-144 (RHNKRR) is interaction with RNA. Substrate contacts are provided by residues D169 and 206–209 (TRYE).

The protein belongs to the class I-like SAM-binding methyltransferase superfamily. TrmB family.

The catalysed reaction is guanosine(46) in tRNA + S-adenosyl-L-methionine = N(7)-methylguanosine(46) in tRNA + S-adenosyl-L-homocysteine. The protein operates within tRNA modification; N(7)-methylguanine-tRNA biosynthesis. Catalyzes the formation of N(7)-methylguanine at position 46 (m7G46) in tRNA. This chain is tRNA (guanine-N(7)-)-methyltransferase, found in Caulobacter sp. (strain K31).